A 560-amino-acid polypeptide reads, in one-letter code: Interferon alpha/beta receptor 1 (560 aa).

A signal peptide spans 1-24 (MLSLLGATTLMLVAGRWVLPAASG). Topologically, residues 25–437 (EANLKSENVE…EKTKPGNTSK (413 aa)) are extracellular. Asn47 and Asn55 each carry an N-linked (GlcNAc...) asparagine glycan. A disulfide bridge links Cys76 with Cys84. N-linked (GlcNAc...) asparagine glycosylation is found at Asn85, Asn108, Asn109, and Asn172. Fibronectin type-III domains lie at 126–226 (QIGP…TTER), 231–329 (SPEN…TEVK), and 333–433 (FPPV…TKPG). Cys199 and Cys220 are joined by a disulfide. N-linked (GlcNAc...) asparagine glycans are attached at residues Asn222, Asn285, Asn313, Asn359, and Asn377. A disulfide bridge connects residues Cys283 and Cys291. Cys404 and Cys427 form a disulfide bridge. N-linked (GlcNAc...) asparagine glycosylation occurs at Asn434. A helical transmembrane segment spans residues 438 to 458 (TWLIAGICTALFSILVVIYVV). Residues 459–560 (RVFLRCVKYV…SEEFLQQDSV (102 aa)) lie on the Cytoplasmic side of the membrane. Cys464 carries S-palmitoyl cysteine lipidation. Residues Tyr467 and Tyr482 each carry the phosphotyrosine; by TYK2 modification. The important for interaction with TYK2 stretch occupies residues 492-501 (LLSTSEEQTE). A phosphoserine mark is found at Ser496 and Ser536. The disordered stretch occupies residues 524–560 (VHEEYNSQASQDSGNYSNEDENSGSKISEEFLQQDSV). Over residues 529 to 540 (NSQASQDSGNYS) the composition is skewed to polar residues.

This sequence belongs to the type II cytokine receptor family. As to quaternary structure, heterodimer with IFNAR2; forming the receptor for type I interferon. Interacts with TYK2. Interacts with STAT1 and STAT2; the interaction requires its phosphorylation at Tyr-482. Interacts (serine-phosphorylated form) with FBXW11, the substrate recognition component of a SCF (SKP1-CUL1-F-box protein) E3 ubiquitin-protein ligase complex. Interacts with SHMT2; this promotes interaction with ABRAXAS2 and the BRISC complex. Interacts with TRIM10; this interaction prevents association between IFNAR1 and TYK2. Post-translationally, ubiquitinated, leading to its internalization and degradation. Polyubiquitinated via 'Lys-48'-linked and 'Lys-63'-linked ubiquitin chains, leading to receptor internalization and lysosomal degradation. The 'Lys-63'-linked ubiquitin chains are cleaved off by the BRISC complex. Phosphorylated on tyrosine residues in response to interferon-binding: phosphorylation by TYK2 tyrosine kinase creates docking sites for STAT proteins. Phosphorylated on serine residues in response to interferon binding; this promotes interaction with FBXW11 and ubiquitination. In terms of processing, palmitoylation at Cys-464 is required for the activation of STAT1 and STAT2. As to expression, expressed in the endometrium. Expressed in all tissues examined except conceptus at day 15 of pregnancy.

It is found in the cell membrane. The protein resides in the late endosome. Its subcellular location is the lysosome. Functionally, together with IFNAR2, forms the heterodimeric receptor for type I interferons (including interferons alpha, beta, epsilon, omega and kappa). Type I interferon binding activates the JAK-STAT signaling cascade, resulting in transcriptional activation or repression of interferon-regulated genes that encode the effectors of the interferon response. Mechanistically, type I interferon-binding brings the IFNAR1 and IFNAR2 subunits into close proximity with one another, driving their associated Janus kinases (JAKs) (TYK2 bound to IFNAR1 and JAK1 bound to IFNAR2) to cross-phosphorylate one another. The activated kinases phosphorylate specific tyrosine residues on the intracellular domains of IFNAR1 and IFNAR2, forming docking sites for the STAT transcription factors. STAT proteins are then phosphorylated by the JAKs, promoting their translocation into the nucleus to regulate expression of interferon-regulated genes. Can also act independently of IFNAR2: form an active IFNB1 receptor by itself and activate a signaling cascade that does not involve activation of the JAK-STAT pathway. This is Interferon alpha/beta receptor 1 (IFNAR1) from Ovis aries (Sheep).